A 51-amino-acid chain; its full sequence is Large ribosomal subunit protein eL40 (51 aa).

Belongs to the eukaryotic ribosomal protein eL40 family.

This Thermofilum pendens (strain DSM 2475 / Hrk 5) protein is Large ribosomal subunit protein eL40.